Here is a 150-residue protein sequence, read N- to C-terminus: MKIIVQRVKNARVTNDTIDNQINKGYCLLVGVGQNSTEEDVKVIARKIAHARLFEDENDKLNLNIQQVEGEILSVSQFTIYADVKKGNRPGFSNSKAPEQAKDLYQKFNKELEGYGLIVKTGEFGTHMNVEINNDGPVTLIYESQDGKII.

The Gly-cisPro motif, important for rejection of L-amino acids signature appears at 136 to 137; sequence GP.

It belongs to the DTD family. Homodimer.

It localises to the cytoplasm. It carries out the reaction glycyl-tRNA(Ala) + H2O = tRNA(Ala) + glycine + H(+). The catalysed reaction is a D-aminoacyl-tRNA + H2O = a tRNA + a D-alpha-amino acid + H(+). An aminoacyl-tRNA editing enzyme that deacylates mischarged D-aminoacyl-tRNAs. Also deacylates mischarged glycyl-tRNA(Ala), protecting cells against glycine mischarging by AlaRS. Acts via tRNA-based rather than protein-based catalysis; rejects L-amino acids rather than detecting D-amino acids in the active site. By recycling D-aminoacyl-tRNA to D-amino acids and free tRNA molecules, this enzyme counteracts the toxicity associated with the formation of D-aminoacyl-tRNA entities in vivo and helps enforce protein L-homochirality. The protein is D-aminoacyl-tRNA deacylase of Staphylococcus epidermidis (strain ATCC 35984 / DSM 28319 / BCRC 17069 / CCUG 31568 / BM 3577 / RP62A).